The following is a 60-amino-acid chain: Large ribosomal subunit protein bL32 (60 aa).

The span at 1 to 20 (MAVPKRKTSPSRRNMRRSHH) shows a compositional bias: basic residues. A disordered region spans residues 1–60 (MAVPKRKTSPSRRNMRRSHHALGANSFIEDKDTGELRRPHHVDLKTGMYNGKQILTPKED). Positions 28 to 44 (IEDKDTGELRRPHHVDL) are enriched in basic and acidic residues.

Belongs to the bacterial ribosomal protein bL32 family.

The polypeptide is Large ribosomal subunit protein bL32 (Caulobacter vibrioides (strain ATCC 19089 / CIP 103742 / CB 15) (Caulobacter crescentus)).